Consider the following 92-residue polypeptide: MTDMTERVGTQVTFEELSALMKRTAGVHVEPPDLRARAEEGFDGFGLDSLGLLGIVAELEKKHGVGLPEQVERCKTPAEFLAQVNATLRTAV.

Residues 11-92 (QVTFEELSAL…QVNATLRTAV (82 aa)) form the Carrier domain. An O-(pantetheine 4'-phosphoryl)serine modification is found at Ser49.

Post-translationally, 4'-phosphopantetheine is transferred from CoA to a specific serine of the apo-ACP-like protein.

Its function is as follows. Involved in developmentally regulated synthesis of a compound biosynthetically related to polyketide antibiotics which is essential for spore color in Streptomyces halstedii. This is Probable acyl carrier protein (sch3) from Streptomyces halstedii.